The sequence spans 825 residues: Conserved oligomeric Golgi complex subunit 6 (825 aa).

Belongs to the COG6 family.

The protein localises to the golgi apparatus membrane. Its function is as follows. Acts as a component of the peripheral membrane COG complex that is involved in intra-Golgi protein trafficking. COG is located at the cis-Golgi, and regulates tethering of retrograde intra-Golgi vesicles and possibly a number of other membrane trafficking events. This Vanderwaltozyma polyspora (strain ATCC 22028 / DSM 70294 / BCRC 21397 / CBS 2163 / NBRC 10782 / NRRL Y-8283 / UCD 57-17) (Kluyveromyces polysporus) protein is Conserved oligomeric Golgi complex subunit 6 (COG6).